The following is an 846-amino-acid chain: MAP7 domain-containing protein 1 (846 aa).

Disordered stretches follow at residues 1–153 and 186–210; these read MESG…ERAK and EQRLKAEQRRAALEERQRQKLEKNK. Pro residues predominate over residues 24-41; it reads EPRPSPEGDPSPPPPPTP. Residues Thr49 and Thr53 each carry the phosphothreonine modification. Residue Ser95 is modified to Phosphoserine. Residue Thr99 is modified to Phosphothreonine. Residues 113–123 are compositionally biased toward low complexity; it reads RSSQPSPTTVP. Ser115 and Ser118 each carry phosphoserine. The residue at position 120 (Thr120) is a Phosphothreonine. A phosphoserine mark is found at Ser125 and Ser127. A coiled-coil region spans residues 130–224; it reads AKQDVKKAGE…AAIQRSVKKT (95 aa). The span at 132–153 shows a compositional bias: basic and acidic residues; the sequence is QDVKKAGERHKLAKERREERAK. Residues Ser256, Ser275, Ser315, Ser368, and Ser401 each carry the phosphoserine modification. The interval 318 to 816 is disordered; the sequence is TLPRNGRDQG…KGTAGDKSLG (499 aa). Positions 407-437 are enriched in basic and acidic residues; that stretch reads RRLEATPVQKKEKKDKERENEKEKSALARER. Positions 414–443 form a coiled coil; the sequence is VQKKEKKDKERENEKEKSALARERNLKKRQ. Ser444, Ser448, Ser454, and Ser460 each carry phosphoserine. Residues 460–471 show a composition bias toward low complexity; it reads SPKSKARPSSPS. Lys462 participates in a covalent cross-link: Glycyl lysine isopeptide (Lys-Gly) (interchain with G-Cter in SUMO2). A phosphoserine mark is found at Ser479 and Ser496. The span at 479 to 497 shows a compositional bias: pro residues; sequence SPCPSPGPGHALPPKPPSP. Basic and acidic residues predominate over residues 523–539; sequence PEDKNHRKSRAAEEKEP. The segment covering 542 to 556 has biased composition (pro residues); the sequence is PASPAPSPVPSPTPA. Phosphoserine is present on residues Ser544, Ser548, and Ser552. A Phosphothreonine modification is found at Thr554. The segment covering 568–579 has biased composition (low complexity); that stretch reads PAETAVPAVPAA. The stretch at 599 to 740 forms a coiled coil; sequence TTDREEATRL…AETKKQDAKE (142 aa). Residues 600 to 740 show a composition bias toward basic and acidic residues; that stretch reads TDREEATRLL…AETKKQDAKE (141 aa). Position 818 is a phosphothreonine (Thr818).

This sequence belongs to the MAP7 family.

The protein localises to the cytoplasm. It is found in the cytoskeleton. Its subcellular location is the spindle. The protein resides in the microtubule organizing center. It localises to the centrosome. The protein localises to the midbody. Microtubule-stabilizing protein involved in the control of cell motility and neurite outgrowth. Facilitate microtubule stabilization through the maintenance of acetylated stable microtubules. This chain is MAP7 domain-containing protein 1 (Map7d1), found in Mus musculus (Mouse).